We begin with the raw amino-acid sequence, 393 residues long: Protein TsgA (393 aa).

12 consecutive transmembrane segments (helical) span residues 11–31 (WISFLSYALTGALVIVTGMVM), 51–71 (FLNAGILISIFLNAWLMEIVP), 78–98 (FGFLLMVLAVAGLMFSHSLAL), 101–121 (AAMFILGVVSGITMSIGTFLI), 134–154 (LLFTDSFFSMAGMIFPMIAAF), 162–182 (WYWVYACIGLVYVAIFILTFG), 206–226 (IGVLFLSIAALCYILGQLGFI), 245–265 (TLVSNFWMSYMVGMWAFSFIL), 273–293 (ILTVLAGLAAILMYVFNTGTP), 297–317 (AWSILALGFFSSAIYTTIITL), 332–352 (FVLTCGTIGTMLTFVVTGPIV), and 361–381 (LLTANGLYAVVFVMCFLLGFV).

Belongs to the major facilitator superfamily. TsgA family.

It localises to the cell inner membrane. In Escherichia coli O7:K1 (strain IAI39 / ExPEC), this protein is Protein TsgA.